Reading from the N-terminus, the 35-residue chain is Flavodoxin (35 aa).

The Flavodoxin-like domain maps to 4-35 (IGLFYGTZTGKTESVAEIIDEFGDEVVTLDID).

Belongs to the flavodoxin family. FMN is required as a cofactor.

Its function is as follows. Low-potential electron donor to a number of redox enzymes. The chain is Flavodoxin from Nostoc sp. (strain MAC).